Reading from the N-terminus, the 126-residue chain is Small ribosomal subunit protein uS11 (126 aa).

The protein belongs to the universal ribosomal protein uS11 family. As to quaternary structure, part of the 30S ribosomal subunit. Interacts with proteins S7 and S18. Binds to IF-3.

Located on the platform of the 30S subunit, it bridges several disparate RNA helices of the 16S rRNA. Forms part of the Shine-Dalgarno cleft in the 70S ribosome. This is Small ribosomal subunit protein uS11 from Orientia tsutsugamushi (strain Boryong) (Rickettsia tsutsugamushi).